The following is a 172-amino-acid chain: Putative methyltransferase Mtx subunit A (172 aa).

The protein belongs to the MtrA family. May be part of a complex composed of 3 subunits; MtxA, MtxH and MtxX.

The protein is Putative methyltransferase Mtx subunit A (mtxA) of Methanosarcina mazei (strain ATCC BAA-159 / DSM 3647 / Goe1 / Go1 / JCM 11833 / OCM 88) (Methanosarcina frisia).